Consider the following 298-residue polypeptide: uncharacterized protein (298 aa).

10 helical membrane passes run 5 to 25, 36 to 56, 76 to 96, 97 to 117, 124 to 144, 147 to 167, 181 to 201, 216 to 236, 244 to 264, and 272 to 292; these read ILFG…MSAF, MENV…IYPF, VVVG…ISLA, TATA…PLLL, SALI…DPSV, VGLV…LAYI, VILA…FIDI, ILWI…LTYA, IIAP…LYLG, and SSLG…PALL. An EamA 1 domain is found at 17–141; the sequence is LCFGIMSAFV…GLVGVVLISD (125 aa). An EamA 2 domain is found at 183–288; that stretch reads LAFAFGMSLL…ILCSGLLIAL (106 aa).

Belongs to the EamA transporter family.

The protein localises to the cell membrane. This is an uncharacterized protein from Helicobacter pylori (strain J99 / ATCC 700824) (Campylobacter pylori J99).